We begin with the raw amino-acid sequence, 356 residues long: DNA polymerase IV (356 aa).

The 182-residue stretch at 7 to 188 (IIHIDMDAFY…IPVTKFYGVG (182 aa)) folds into the UmuC domain. Asp-11 and Asp-106 together coordinate Mg(2+). Residue Glu-107 is part of the active site.

This sequence belongs to the DNA polymerase type-Y family. In terms of assembly, monomer. Requires Mg(2+) as cofactor.

It localises to the cytoplasm. The enzyme catalyses DNA(n) + a 2'-deoxyribonucleoside 5'-triphosphate = DNA(n+1) + diphosphate. In terms of biological role, poorly processive, error-prone DNA polymerase involved in untargeted mutagenesis. Copies undamaged DNA at stalled replication forks, which arise in vivo from mismatched or misaligned primer ends. These misaligned primers can be extended by PolIV. Exhibits no 3'-5' exonuclease (proofreading) activity. May be involved in translesional synthesis, in conjunction with the beta clamp from PolIII. This is DNA polymerase IV from Listeria welshimeri serovar 6b (strain ATCC 35897 / DSM 20650 / CCUG 15529 / CIP 8149 / NCTC 11857 / SLCC 5334 / V8).